Here is a 780-residue protein sequence, read N- to C-terminus: Kojibiose phosphorylase (780 aa).

Residue 354–355 (WD) coordinates substrate. Glu-496 (proton donor) is an active-site residue. 608–609 (KQ) is a substrate binding site.

Belongs to the glycosyl hydrolase 65 family.

The enzyme catalyses kojibiose + phosphate = beta-D-glucose 1-phosphate + D-glucose. Functionally, catalyzes the reversible phosphorolysis of kojibiose into beta-D-glucose 1-phosphate (Glc1P) and D-glucose. In the reverse direction, uses Glc1P as acceptor to produce alpha-1,2-glucans up to a degree of polymerization of 6. The polypeptide is Kojibiose phosphorylase (Halothermothrix orenii (strain H 168 / OCM 544 / DSM 9562)).